A 353-amino-acid polypeptide reads, in one-letter code: uncharacterized protein (353 aa).

The signal sequence occupies residues 1 to 24; sequence MRVVKRIAVACYLGITIFSGIAFG.

Belongs to the chlamydial CPn_1058/CT_355/TC_0634 family.

This is an uncharacterized protein from Chlamydia muridarum (strain MoPn / Nigg).